The primary structure comprises 598 residues: Aspartate--tRNA ligase (598 aa).

An L-aspartate-binding site is contributed by glutamate 175. The interval glutamine 199–lysine 202 is aspartate. Residue arginine 221 participates in L-aspartate binding. ATP contacts are provided by residues arginine 221–glutamate 223 and glutamine 230. An L-aspartate-binding site is contributed by histidine 450. An ATP-binding site is contributed by glutamate 486. Arginine 493 provides a ligand contact to L-aspartate. Glycine 538–arginine 541 lines the ATP pocket.

Belongs to the class-II aminoacyl-tRNA synthetase family. Type 1 subfamily. In terms of assembly, homodimer.

It is found in the cytoplasm. The enzyme catalyses tRNA(Asp) + L-aspartate + ATP = L-aspartyl-tRNA(Asp) + AMP + diphosphate. Functionally, catalyzes the attachment of L-aspartate to tRNA(Asp) in a two-step reaction: L-aspartate is first activated by ATP to form Asp-AMP and then transferred to the acceptor end of tRNA(Asp). The protein is Aspartate--tRNA ligase of Lactiplantibacillus plantarum (strain ATCC BAA-793 / NCIMB 8826 / WCFS1) (Lactobacillus plantarum).